The following is a 277-amino-acid chain: tRNA uridine(34) hydroxylase (277 aa).

Positions 126-221 (SSPDVHVIDT…YLETVRGDDS (96 aa)) constitute a Rhodanese domain. Residue Cys-181 is the Cysteine persulfide intermediate of the active site.

It belongs to the TrhO family.

The catalysed reaction is uridine(34) in tRNA + AH2 + O2 = 5-hydroxyuridine(34) in tRNA + A + H2O. In terms of biological role, catalyzes oxygen-dependent 5-hydroxyuridine (ho5U) modification at position 34 in tRNAs. The polypeptide is tRNA uridine(34) hydroxylase (Anaplasma marginale (strain Florida)).